A 339-amino-acid chain; its full sequence is Ketol-acid reductoisomerase (NADP(+)) (339 aa).

The 182-residue stretch at 1 to 182 (MRVYYDRDAD…GGGRSGVIET (182 aa)) folds into the KARI N-terminal Rossmann domain. Residues 24 to 27 (YGSQ), R48, S51, T53, and 83 to 86 (DELQ) each bind NADP(+). H108 is a catalytic residue. Position 134 (G134) interacts with NADP(+). One can recognise a KARI C-terminal knotted domain in the interval 183–328 (NFREECETDL…GRLRAMMPWI (146 aa)). D191, E195, E227, and E231 together coordinate Mg(2+). Residue S252 coordinates substrate.

Belongs to the ketol-acid reductoisomerase family. Requires Mg(2+) as cofactor.

It catalyses the reaction (2R)-2,3-dihydroxy-3-methylbutanoate + NADP(+) = (2S)-2-acetolactate + NADPH + H(+). The catalysed reaction is (2R,3R)-2,3-dihydroxy-3-methylpentanoate + NADP(+) = (S)-2-ethyl-2-hydroxy-3-oxobutanoate + NADPH + H(+). The protein operates within amino-acid biosynthesis; L-isoleucine biosynthesis; L-isoleucine from 2-oxobutanoate: step 2/4. It functions in the pathway amino-acid biosynthesis; L-valine biosynthesis; L-valine from pyruvate: step 2/4. In terms of biological role, involved in the biosynthesis of branched-chain amino acids (BCAA). Catalyzes an alkyl-migration followed by a ketol-acid reduction of (S)-2-acetolactate (S2AL) to yield (R)-2,3-dihydroxy-isovalerate. In the isomerase reaction, S2AL is rearranged via a Mg-dependent methyl migration to produce 3-hydroxy-3-methyl-2-ketobutyrate (HMKB). In the reductase reaction, this 2-ketoacid undergoes a metal-dependent reduction by NADPH to yield (R)-2,3-dihydroxy-isovalerate. In Phenylobacterium zucineum (strain HLK1), this protein is Ketol-acid reductoisomerase (NADP(+)).